Reading from the N-terminus, the 105-residue chain is Large ribosomal subunit protein uL24 (105 aa).

This sequence belongs to the universal ribosomal protein uL24 family. As to quaternary structure, part of the 50S ribosomal subunit.

Its function is as follows. One of two assembly initiator proteins, it binds directly to the 5'-end of the 23S rRNA, where it nucleates assembly of the 50S subunit. Functionally, one of the proteins that surrounds the polypeptide exit tunnel on the outside of the subunit. The polypeptide is Large ribosomal subunit protein uL24 (Xanthomonas axonopodis pv. citri (strain 306)).